The following is a 24-amino-acid chain: Cytochrome c3-2 (24 aa).

Residues Gly-1 to Pro-24 form a disordered region.

Binds 4 heme groups per subunit.

It is found in the periplasm. Participates in sulfate respiration coupled with phosphorylation by transferring electrons from the enzyme dehydrogenase to ferredoxin. The protein is Cytochrome c3-2 of Nitratidesulfovibrio vulgaris (Desulfovibrio vulgaris).